We begin with the raw amino-acid sequence, 359 residues long: Photosystem II protein D1 1 (359 aa).

3 consecutive transmembrane segments (helical) span residues 29–46 (YVGW…AATT), 118–133 (HFLI…EWEL), and 142–156 (WICI…AASA). Chlorophyll a is bound at residue H118. Pheophytin a is bound at residue Y126. [CaMn4O5] cluster contacts are provided by D170 and E189. Residues 197–218 (FHMLGVAGVFGGSLFSAMHGSL) form a helical membrane-spanning segment. H198 is a binding site for chlorophyll a. Residues H215 and 264–265 (SF) each bind a quinone. Residue H215 coordinates Fe cation. H272 provides a ligand contact to Fe cation. Residues 274–288 (FLAAWPVVGIWFTAL) traverse the membrane as a helical segment. 4 residues coordinate [CaMn4O5] cluster: H332, E333, D342, and A344. The propeptide occupies 345–359 (AAESAPVALQAPAIG).

This sequence belongs to the reaction center PufL/M/PsbA/D family. In terms of assembly, PSII is composed of 1 copy each of membrane proteins PsbA, PsbB, PsbC, PsbD, PsbE, PsbF, PsbH, PsbI, PsbJ, PsbK, PsbL, PsbM, PsbT, PsbX, PsbY, PsbZ, Psb30/Ycf12, peripheral proteins PsbO, CyanoQ (PsbQ), PsbU, PsbV and a large number of cofactors. It forms dimeric complexes. The D1/D2 heterodimer binds P680, chlorophylls that are the primary electron donor of PSII, and subsequent electron acceptors. It shares a non-heme iron and each subunit binds pheophytin, quinone, additional chlorophylls, carotenoids and lipids. D1 provides most of the ligands for the Mn4-Ca-O5 cluster of the oxygen-evolving complex (OEC). There is also a Cl(-1) ion associated with D1 and D2, which is required for oxygen evolution. The PSII complex binds additional chlorophylls, carotenoids and specific lipids. serves as cofactor. Post-translationally, tyr-161 forms a radical intermediate that is referred to as redox-active TyrZ, YZ or Y-Z. In terms of processing, C-terminally processed by CtpA; processing is essential to allow assembly of the oxygen-evolving complex and thus photosynthetic growth.

It localises to the cellular thylakoid membrane. The enzyme catalyses 2 a plastoquinone + 4 hnu + 2 H2O = 2 a plastoquinol + O2. Its function is as follows. Photosystem II (PSII) is a light-driven water:plastoquinone oxidoreductase that uses light energy to abstract electrons from H(2)O, generating O(2) and a proton gradient subsequently used for ATP formation. It consists of a core antenna complex that captures photons, and an electron transfer chain that converts photonic excitation into a charge separation. The D1/D2 (PsbA/PsbD) reaction center heterodimer binds P680, the primary electron donor of PSII as well as several subsequent electron acceptors. This Synechococcus sp. (strain RCC307) protein is Photosystem II protein D1 1.